The sequence spans 212 residues: Protein-L-isoaspartate O-methyltransferase (212 aa).

Ser-60 is a catalytic residue.

The protein belongs to the methyltransferase superfamily. L-isoaspartyl/D-aspartyl protein methyltransferase family.

It localises to the cytoplasm. It catalyses the reaction [protein]-L-isoaspartate + S-adenosyl-L-methionine = [protein]-L-isoaspartate alpha-methyl ester + S-adenosyl-L-homocysteine. Functionally, catalyzes the methyl esterification of L-isoaspartyl residues in peptides and proteins that result from spontaneous decomposition of normal L-aspartyl and L-asparaginyl residues. It plays a role in the repair and/or degradation of damaged proteins. This is Protein-L-isoaspartate O-methyltransferase from Pseudomonas entomophila (strain L48).